The chain runs to 544 residues: METWRCVRRGYGRCVAGRGRYSMFPYPLKSLGRDWTTPWEDLQKYCWRRHISSCLRWPGHYSRAPYPYFSSRHFSLNCRPPFLFESGTQFQYYNWRSDHLSNASLIHLSRHVMTSDRDEPLSKRRKHQGTIKRNWEYLCSHNKENTKDLEDRNVDSTCEDREDKFDFSVMSYNILSQDLLEDNSHLYRHCRRPVLHWSFRFPNILKEIKHFDADVLCLQEVQEDHYGTEIRPSLESLGYHCEYKMKTGRKPDGCAICFKHSRFSLLSVNPVEFCRRDIPLLDRDNIGLVLLLQPKIPRAASPSICIANTHLLYNPRRGDIKLTQLAMLLAEIANVTHRKDGSSCPIVMCGDFNSVPGSPLYSFIKEGKLNYEGLAIGKVSGQEQSSRGQRILSIPIWPPNLGISQNCVYEAQQVPKVEKTDSDVTQAQQEKAEVPVSADKVSSHLQHGFSLSSVYSHYVPDTGVPEVTTCHSRSAITVDYIFYTAKKENTAQGPGAEVALVGGLKLLARLSLLTEQDLWTVNGLPNEHNSSDHLPLLAKFRLEL.

Belongs to the CCR4/nocturin family.

The protein is Protein angel homolog 2 (Angel2) of Mus musculus (Mouse).